Here is a 1378-residue protein sequence, read N- to C-terminus: Attractin-like protein 1 (1378 aa).

Positions 1–51 are cleaved as a signal peptide; it reads MEPGVRARSGAPQPASPVLWRARPAGGGGASSWLLLDGNSWLLCYGFLYLA. Residues 52 to 90 enclose the EGF-like 1 domain; sequence LYAQVSQSKPCERTGSCFSGRCVNSTCLCDPGWVGDQCQ. Over 52–1229 the chain is Extracellular; sequence LYAQVSQSKP…FSQHNTIMDL (1178 aa). Disulfide bonds link cysteine 62–cysteine 78, cysteine 80–cysteine 89, and cysteine 92–cysteine 118. Residue asparagine 75 is glycosylated (N-linked (GlcNAc...) asparagine). Positions 92–208 constitute a CUB domain; the sequence is CQGRFKLTEP…TGFNIFYSIN (117 aa). N-linked (GlcNAc...) asparagine glycans are attached at residues asparagine 173 and asparagine 197. In terms of domain architecture, EGF-like 2 spans 206–244; sequence SINSCPNNCSGHGKCTTSVSVASQVYCECDKYWKGEACD. 3 disulfides stabilise this stretch: cysteine 210–cysteine 220, cysteine 214–cysteine 232, and cysteine 234–cysteine 243. 6 Kelch repeats span residues 315–364, 366–414, 426–474, 479–530, 532–590, and 591–637; these read FMWV…LYQE, IFMY…EGHS, VMIV…SVYD, SIYV…LING, MLIF…VING, and SMYI…WNKN. A glycan (N-linked (GlcNAc...) asparagine) is linked at asparagine 379. PSI domains lie at 613-656, 665-708, and 714-759; these read NCKA…AKCP, RCYR…TKCH, and ICNK…DACL. The N-linked (GlcNAc...) asparagine glycan is linked to asparagine 703. Residues 754–872 enclose the C-type lectin domain; it reads VGDACLRINS…TSMADGLVCE (119 aa). Cysteine 775 and cysteine 871 are joined by a disulfide. N-linked (GlcNAc...) asparagine glycans are attached at residues asparagine 777 and asparagine 897. PSI domains are found at residues 888–938 and 941–1011; these read PCSL…ATCS and NCSG…IQCP. 8 cysteine pairs are disulfide-bonded: cysteine 1013–cysteine 1021, cysteine 1015–cysteine 1027, cysteine 1030–cysteine 1039, cysteine 1042–cysteine 1056, cysteine 1059–cysteine 1068, cysteine 1061–cysteine 1075, cysteine 1077–cysteine 1087, and cysteine 1090–cysteine 1105. 2 consecutive Laminin EGF-like domains span residues 1013–1058 and 1059–1107; these read CQCN…QCTA and CTCG…TCYY. Asparagine 1156 carries an N-linked (GlcNAc...) asparagine glycan. Residues 1230 to 1250 form a helical membrane-spanning segment; sequence VQFFVTFFSCFLSLLLVAAVV. Topologically, residues 1251–1378 are cytoplasmic; sequence WKIKQTCWAS…HLSTRQGTCV (128 aa). An interaction with MC4R region spans residues 1287–1324; the sequence is VGAEQTDFLRGPLEGAPKPIAIEPCAGNRAAVLTVFLC. The disordered stretch occupies residues 1351–1378; the sequence is QQKPSDNKDKTSGVRNRKHLSTRQGTCV.

As to quaternary structure, interacts with MC4R. In terms of tissue distribution, highly expressed in brain, heart, lung, kidney and liver. In the central nervous system, it is highly expressed in the dentate gyrus, CA1-3 regions of the hippocampus, and the ventral taenia tecta.

It is found in the cell membrane. In terms of biological role, may play a role in melanocortin signaling pathways that regulate energy homeostasis. The sequence is that of Attractin-like protein 1 (Atrnl1) from Mus musculus (Mouse).